The primary structure comprises 148 residues: Deoxyuridine 5'-triphosphate nucleotidohydrolase (148 aa).

Residues 67–69, N80, 84–86, and M94 each bind substrate; these read RSG and LID.

The protein belongs to the dUTPase family. Mg(2+) serves as cofactor.

The enzyme catalyses dUTP + H2O = dUMP + diphosphate + H(+). The protein operates within pyrimidine metabolism; dUMP biosynthesis; dUMP from dCTP (dUTP route): step 2/2. In terms of biological role, this enzyme is involved in nucleotide metabolism: it produces dUMP, the immediate precursor of thymidine nucleotides and it decreases the intracellular concentration of dUTP so that uracil cannot be incorporated into DNA. The chain is Deoxyuridine 5'-triphosphate nucleotidohydrolase from Burkholderia cenocepacia (strain ATCC BAA-245 / DSM 16553 / LMG 16656 / NCTC 13227 / J2315 / CF5610) (Burkholderia cepacia (strain J2315)).